Reading from the N-terminus, the 309-residue chain is Homoserine kinase (309 aa).

Pro91–Cys101 serves as a coordination point for ATP.

Belongs to the GHMP kinase family. Homoserine kinase subfamily.

Its subcellular location is the cytoplasm. It catalyses the reaction L-homoserine + ATP = O-phospho-L-homoserine + ADP + H(+). The protein operates within amino-acid biosynthesis; L-threonine biosynthesis; L-threonine from L-aspartate: step 4/5. Catalyzes the ATP-dependent phosphorylation of L-homoserine to L-homoserine phosphate. The sequence is that of Homoserine kinase from Buchnera aphidicola subsp. Acyrthosiphon pisum (strain APS) (Acyrthosiphon pisum symbiotic bacterium).